A 131-amino-acid chain; its full sequence is Small ribosomal subunit protein uS11 (131 aa).

It belongs to the universal ribosomal protein uS11 family. Part of the 30S ribosomal subunit. Interacts with proteins S7 and S18. Binds to IF-3.

Its function is as follows. Located on the platform of the 30S subunit, it bridges several disparate RNA helices of the 16S rRNA. Forms part of the Shine-Dalgarno cleft in the 70S ribosome. The protein is Small ribosomal subunit protein uS11 of Bacillus pumilus (strain SAFR-032).